Consider the following 742-residue polypeptide: MGSSINYPGFVTKSAHLADTSTDASISCEEATSSQEAKKNFFQRDYNMMKKAPAPTKSKLSLALQTSKSSSSANGTVQEDTSSKTEDFSTKSIKKKPDSGVESHVSIQSDSGPQSDSDLDSDSSISSCDERNEESLKDYRPGGYHPAFKGEPYKDARYILVRKLGWGHFSTVWLAKDMVNNTHVAMKIVRGDKVYTEAAEDEIKLLQRVNDADNTKEDSMGANHILKLLDHFNHKGPNGVHVVMVFEVLGENLLALIKKYEHRGIPLIYVKQISKQLLLGLDYMHRRCGIIHTDIKPENVLMEIGDVEGIVQMVEALDKQKREAKRLQRHVSRSSDITANDSSDEKWAECQTSMPCGSSSNSKSRSIEKDLSKRCFRRPRRHTIITGSQPLPSPISSSNFFEMRAHFCGSSHNSFSSVSGNRNIPSSINNNSINNGIGIKNSNNSFLNSVPHSVTRMFINEDSNDNNNNDNSKNKNNNNNNSNNNNNEDIMNTPLHEEQLADSLSTFDISNISQSSDTNGPYISNTMDSNSNVSTDINSPENLIQIKIADLGNACWYDEHYTNSIQTREYRSPEVLLGAPWGCGADIWSTACLIFELITGDFLFEPDEGHSYTKDDDHIAQIIELLGELPSYLLRNGKYTRTFFNSRGLLRNISKLKFWPLEDVLTEKYKFSKDEAKEISDFLSPMLQLDPRKRADAGGLVNHPWLKDTLGMEEIRVPDRELYGSGSDIPGWFEEVRDHKRH.

The tract at residues 13–146 (KSAHLADTST…KDYRPGGYHP (134 aa)) is disordered. Polar residues predominate over residues 19–35 (DTSTDASISCEEATSSQ). A compositionally biased stretch (low complexity) spans 56–73 (TKSKLSLALQTSKSSSSA). A compositionally biased stretch (basic and acidic residues) spans 81 to 101 (TSSKTEDFSTKSIKKKPDSGV). Residues 106-127 (SIQSDSGPQSDSDLDSDSSISS) are compositionally biased toward low complexity. Residues 128–140 (CDERNEESLKDYR) are compositionally biased toward basic and acidic residues. The Protein kinase domain occupies 158 to 706 (YILVRKLGWG…AGGLVNHPWL (549 aa)). Residues 164–172 (LGWGHFSTV) and K187 each bind ATP. Residue D294 is the Proton acceptor of the active site. 2 positions are modified to phosphothreonine: T383 and T386. Phosphoserine occurs at positions 388, 393, 410, 427, 432, 445, 449, and 453. Residues 459–491 (INEDSNDNNNNDNSKNKNNNNNNSNNNNNEDIM) are disordered. The segment covering 465-489 (DNNNNDNSKNKNNNNNNSNNNNNED) has biased composition (low complexity).

This sequence belongs to the protein kinase superfamily. Ser/Thr protein kinase family.

The catalysed reaction is L-seryl-[protein] + ATP = O-phospho-L-seryl-[protein] + ADP + H(+). It catalyses the reaction L-threonyl-[protein] + ATP = O-phospho-L-threonyl-[protein] + ADP + H(+). In terms of biological role, constitutively active kinase, specifically and sequentially phosphorylates serine/arginine (SR)-type shuttling mRNA binding proteins in their RS dipeptide repeats. The sequence is that of Serine/threonine-protein kinase SKY1 (SKY1) from Saccharomyces cerevisiae (strain ATCC 204508 / S288c) (Baker's yeast).